The primary structure comprises 87 residues: Sec-independent protein translocase protein TatA (87 aa).

The helical transmembrane segment at 1-21 (MGGISIWQLLIIALIIVLLFG) threads the bilayer. Positions 54-87 (NTEADADFEQKTLSKEEQQSEDPVQKSQKDKEQV) are disordered.

It belongs to the TatA/E family. As to quaternary structure, the Tat system comprises two distinct complexes: a TatABC complex, containing multiple copies of TatA, TatB and TatC subunits, and a separate TatA complex, containing only TatA subunits. Substrates initially bind to the TatABC complex, which probably triggers association of the separate TatA complex to form the active translocon.

The protein localises to the cell inner membrane. In terms of biological role, part of the twin-arginine translocation (Tat) system that transports large folded proteins containing a characteristic twin-arginine motif in their signal peptide across membranes. TatA could form the protein-conducting channel of the Tat system. In Photobacterium profundum (strain SS9), this protein is Sec-independent protein translocase protein TatA.